The sequence spans 552 residues: Dihydroxy-acid dehydratase (552 aa).

Residue Asp-78 participates in Mg(2+) binding. Cys-119 provides a ligand contact to [2Fe-2S] cluster. Mg(2+) contacts are provided by Asp-120 and Lys-121. Lys-121 is modified (N6-carboxylysine). Position 191 (Cys-191) interacts with [2Fe-2S] cluster. Glu-442 serves as a coordination point for Mg(2+). Residue Ser-468 is the Proton acceptor of the active site.

This sequence belongs to the IlvD/Edd family. Homodimer. [2Fe-2S] cluster serves as cofactor. Requires Mg(2+) as cofactor.

It catalyses the reaction (2R)-2,3-dihydroxy-3-methylbutanoate = 3-methyl-2-oxobutanoate + H2O. The catalysed reaction is (2R,3R)-2,3-dihydroxy-3-methylpentanoate = (S)-3-methyl-2-oxopentanoate + H2O. The protein operates within amino-acid biosynthesis; L-isoleucine biosynthesis; L-isoleucine from 2-oxobutanoate: step 3/4. It participates in amino-acid biosynthesis; L-valine biosynthesis; L-valine from pyruvate: step 3/4. Its function is as follows. Functions in the biosynthesis of branched-chain amino acids. Catalyzes the dehydration of (2R,3R)-2,3-dihydroxy-3-methylpentanoate (2,3-dihydroxy-3-methylvalerate) into 2-oxo-3-methylpentanoate (2-oxo-3-methylvalerate) and of (2R)-2,3-dihydroxy-3-methylbutanoate (2,3-dihydroxyisovalerate) into 2-oxo-3-methylbutanoate (2-oxoisovalerate), the penultimate precursor to L-isoleucine and L-valine, respectively. This Moorella thermoacetica (strain ATCC 39073 / JCM 9320) protein is Dihydroxy-acid dehydratase.